The following is a 392-amino-acid chain: DNA-directed RNA polymerase subunit Rpo1C (392 aa).

Belongs to the RNA polymerase beta' chain family. In terms of assembly, part of the RNA polymerase complex.

The protein resides in the cytoplasm. The enzyme catalyses RNA(n) + a ribonucleoside 5'-triphosphate = RNA(n+1) + diphosphate. Functionally, DNA-dependent RNA polymerase (RNAP) catalyzes the transcription of DNA into RNA using the four ribonucleoside triphosphates as substrates. Forms part of the jaw domain. The sequence is that of DNA-directed RNA polymerase subunit Rpo1C from Sulfurisphaera tokodaii (strain DSM 16993 / JCM 10545 / NBRC 100140 / 7) (Sulfolobus tokodaii).